Consider the following 132-residue polypeptide: Seminal vesicle protein SVP-2 (132 aa).

An N-terminal signal peptide occupies residues 1–14 (HLALLLILENQASG). Positions 33-81 (HKEEVEESESSRGQDFDKRRFWEKDDPTGEHVSVRHEHLEKSHIRFKED) are enriched in basic and acidic residues. 2 disordered regions span residues 33–104 (HKEE…LKRH) and 113–132 (VEDQALANGADPGKSNMQRV). A propeptide spanning residues 104 to 132 (HDAMEELVSVEDQALANGADPGKSNMQRV) is cleaved from the precursor.

It to the SVP-1/-3/-4 precursor, particularly in regions where protein processing must occur.

The protein resides in the secreted. The sequence is that of Seminal vesicle protein SVP-2 from Cavia porcellus (Guinea pig).